Reading from the N-terminus, the 482-residue chain is Islet cell autoantigen 1-like protein (482 aa).

Residues 44–247 form the AH domain; the sequence is ASDAELDAKL…TARMMSQIHE (204 aa). 2 disordered regions span residues 365–393 and 427–449; these read TQECQTAFGSPSASLTSQEPSMGSEPLAH and SHTDNQPVPSQSPKKLTRSPNNG. 2 stretches are compositionally biased toward polar residues: residues 366–385 and 428–449; these read QECQTAFGSPSASLTSQEPS and HTDNQPVPSQSPKKLTRSPNNG.

The sequence is that of Islet cell autoantigen 1-like protein (ICA1L) from Homo sapiens (Human).